Consider the following 362-residue polypeptide: 3-dehydroquinate synthase (362 aa).

Residues 95–99 (GVVGD), 119–120 (TT), Lys-132, and Lys-141 each bind NAD(+). The Zn(2+) site is built by Glu-174, His-238, and His-255.

It belongs to the sugar phosphate cyclases superfamily. Dehydroquinate synthase family. Co(2+) is required as a cofactor. Zn(2+) serves as cofactor. Requires NAD(+) as cofactor.

The protein resides in the cytoplasm. The catalysed reaction is 7-phospho-2-dehydro-3-deoxy-D-arabino-heptonate = 3-dehydroquinate + phosphate. Its pathway is metabolic intermediate biosynthesis; chorismate biosynthesis; chorismate from D-erythrose 4-phosphate and phosphoenolpyruvate: step 2/7. In terms of biological role, catalyzes the conversion of 3-deoxy-D-arabino-heptulosonate 7-phosphate (DAHP) to dehydroquinate (DHQ). The protein is 3-dehydroquinate synthase of Chlorobium luteolum (strain DSM 273 / BCRC 81028 / 2530) (Pelodictyon luteolum).